Reading from the N-terminus, the 617-residue chain is Vitamin B12 transporter BtuB (617 aa).

An N-terminal signal peptide occupies residues 1 to 22 (MRKTFLAITCASLLSPTFYSQA). The TonB box signature appears at 29-36 (ETVVVTAN). Positions 40 to 154 (QIDGAVLAQT…ISGVINIITR (115 aa)) constitute a TBDR plug domain. Residues 159–617 (DDSGRVSAGY…QYFVSADYRF (459 aa)) form the TBDR beta-barrel domain. The short motif at 600 to 617 (VGYVTPGRQYFVSADYRF) is the TonB C-terminal box element.

This sequence belongs to the TonB-dependent receptor family. BtuB (TC 1.B.14.3.1) subfamily.

The protein resides in the cell outer membrane. Involved in the active translocation of vitamin B12 (cyanocobalamin) across the outer membrane to the periplasmic space. It derives its energy for transport by interacting with the trans-periplasmic membrane protein TonB. This is Vitamin B12 transporter BtuB from Vibrio campbellii (strain ATCC BAA-1116).